Reading from the N-terminus, the 114-residue chain is MKGTLLLLALLVTGELGFQRTEACIPFFGVYLGILSGNRIGLHTELAPFDPTVEEKEAFEKIQDCYEEEGLKAKTEDMKLMTTILFSSECRSYYTKEVLKNILVKFSKKLTHGS.

Residues 1-23 (MKGTLLLLALLVTGELGFQRTEA) form the signal peptide.

Belongs to the secretoglobin family. In terms of tissue distribution, expressed in lacrimal gland.

The protein localises to the secreted. The protein is Secretoglobin family 2B member 2 (Scgb2b2) of Mus musculus (Mouse).